Reading from the N-terminus, the 265-residue chain is 5'-nucleotidase SurE (265 aa).

Residues aspartate 12, aspartate 13, serine 43, and asparagine 91 each coordinate a divalent metal cation.

Belongs to the SurE nucleotidase family. A divalent metal cation serves as cofactor.

It is found in the cytoplasm. It carries out the reaction a ribonucleoside 5'-phosphate + H2O = a ribonucleoside + phosphate. In terms of biological role, nucleotidase that shows phosphatase activity on nucleoside 5'-monophosphates. The protein is 5'-nucleotidase SurE of Haloquadratum walsbyi (strain DSM 16790 / HBSQ001).